The sequence spans 80 residues: Conotoxin Bu14 (80 aa).

The N-terminal stretch at 1 to 8 (AACQLGTA) is a signal peptide. A propeptide spanning residues 9–40 (ASFARDKQDYPAVRSDGRQDSKDSTLDRIAKR) is cleaved from the precursor. Disulfide bonds link Cys-41-Cys-55, Cys-48-Cys-59, and Cys-54-Cys-69.

The protein belongs to the conotoxin O1 superfamily. In terms of tissue distribution, expressed by the venom duct.

The protein resides in the secreted. The protein is Conotoxin Bu14 of Conus bullatus (Bubble cone).